A 192-amino-acid polypeptide reads, in one-letter code: Ethylene-responsive transcription factor ERF027 (192 aa).

A DNA-binding region (AP2/ERF) is located at residues 18-74; the sequence is VYRGIRCRSGKWVSEIREPRKTTRIWLGTYPMAEMAAAAYDVAAMALKGREAVLNFP. 2 disordered regions span residues 104–132 and 167–192; these read CEEGEEEKKAKEKKSSSSKSRARECHVDN and APPSWMGSRPSDDSPENSNDEDLWGY. Positions 179–192 are enriched in acidic residues; sequence DSPENSNDEDLWGY.

The protein belongs to the AP2/ERF transcription factor family. ERF subfamily.

It is found in the nucleus. Functionally, probably acts as a transcriptional activator. Binds to the GCC-box pathogenesis-related promoter element. May be involved in the regulation of gene expression by stress factors and by components of stress signal transduction pathways. The polypeptide is Ethylene-responsive transcription factor ERF027 (ERF027) (Arabidopsis thaliana (Mouse-ear cress)).